Reading from the N-terminus, the 279-residue chain is Phosphatidylglycerol--prolipoprotein diacylglyceryl transferase (279 aa).

3 consecutive transmembrane segments (helical) span residues 18–38, 55–75, and 89–109; these read LSVRWYGIIIAVGILLGYFVA, IIFYSALFGFIAARIYFVIFQ, and IWHGGIAIHGGLIGGFIAGVI. Arg137 provides a ligand contact to a 1,2-diacyl-sn-glycero-3-phospho-(1'-sn-glycerol). The next 2 membrane-spanning stretches (helical) occupy residues 203-223 and 235-255; these read LGETFFLYLTWYSIGRFFIEG and IRVAQLVSILLILISISLIVY.

This sequence belongs to the Lgt family.

It is found in the cell membrane. It carries out the reaction L-cysteinyl-[prolipoprotein] + a 1,2-diacyl-sn-glycero-3-phospho-(1'-sn-glycerol) = an S-1,2-diacyl-sn-glyceryl-L-cysteinyl-[prolipoprotein] + sn-glycerol 1-phosphate + H(+). It participates in protein modification; lipoprotein biosynthesis (diacylglyceryl transfer). Its function is as follows. Catalyzes the transfer of the diacylglyceryl group from phosphatidylglycerol to the sulfhydryl group of the N-terminal cysteine of a prolipoprotein, the first step in the formation of mature lipoproteins. In Staphylococcus aureus (strain bovine RF122 / ET3-1), this protein is Phosphatidylglycerol--prolipoprotein diacylglyceryl transferase.